A 1100-amino-acid chain; its full sequence is Beta-alanine-activating enzyme (1100 aa).

Residues 162-181 (HKVTDREDRVSAESRTPEKE) are disordered. ATP is bound by residues 197 to 205 (TSGTTGTPK), Asp-427, Arg-441, and Lys-526. Residues 552 to 632 (EELWGKLQYL…DVYNHIVQAV (81 aa)) form the Carrier domain. Position 591 is an O-(pantetheine 4'-phosphoryl)serine (Ser-591). The disordered stretch occupies residues 643-671 (SYTTKRKFSDADPEEASGKPARLESAWPS). Position 651 is a phosphoserine (Ser-651).

This sequence belongs to the ATP-dependent AMP-binding enzyme family.

In terms of biological role, covalently binds beta-alanine in an ATP-dependent manner to form a thioester bond with its phosphopantetheine group and transfers it to an as yet unknown acceptor via an amide bond. May be required for a post-translational protein modification or for post-transcriptional modification of an RNA. The chain is Beta-alanine-activating enzyme (Aasdh) from Mus musculus (Mouse).